The following is a 335-amino-acid chain: Phosphate acyltransferase (335 aa).

It belongs to the PlsX family. Homodimer. Probably interacts with PlsY.

The protein resides in the cytoplasm. The catalysed reaction is a fatty acyl-[ACP] + phosphate = an acyl phosphate + holo-[ACP]. It functions in the pathway lipid metabolism; phospholipid metabolism. Catalyzes the reversible formation of acyl-phosphate (acyl-PO(4)) from acyl-[acyl-carrier-protein] (acyl-ACP). This enzyme utilizes acyl-ACP as fatty acyl donor, but not acyl-CoA. The chain is Phosphate acyltransferase from Streptococcus uberis (strain ATCC BAA-854 / 0140J).